Reading from the N-terminus, the 1404-residue chain is Probable GPI-anchored adhesin-like protein PGA55 (1404 aa).

The N-terminal stretch at 1-19 (MVLLCKYKVSWVFVLSVAG) is a signal peptide. Repeat copies occupy residues 104–109 (VSSSSS), 136–141 (VSSSSE), 156–161 (VSSSSK), 162–167 (VSSSSE), 183–188 (VSSSSQ), 196–201 (VSSSSE), 203–208 (VSSSSE), 209–214 (VSSSSE), 216–221 (VSSSSE), 222–227 (VSSSSE), 228–233 (VSSSSE), 234–239 (VSSSSQ), 247–252 (VSSSSE), 253–258 (VSSSSS), 261–266 (VSSSSE), 267–272 (VSSSSE), 274–279 (VSSSSE), 280–285 (VSSSSE), 286–291 (VSSSSE), 292–297 (VSSSSE), 298–303 (VSSSSE), 304–309 (VSSSSQ), 317–322 (VSSSSE), 324–329 (VSSSSE), 330–335 (VSSSSE), 336–341 (VSSSSE), 343–348 (VSSSSE), 349–354 (VSSSSE), 355–360 (VSSSSE), 361–366 (VSSSSQ), 374–379 (VSSSSE), 380–385 (VSSSSS), 388–393 (VSSSSE), 394–399 (VSSSSE), 401–406 (VSSSSE), 407–412 (VSSSSE), 413–418 (VSSSSE), 419–424 (VSSSSE), 425–430 (VSSSSE), 431–436 (VSSSSQ), 444–449 (VSSSSE), 450–455 (VSSSSE), 457–462 (VSSSSE), 463–468 (VSSSSE), 469–474 (VSSSSE), 475–480 (VSSSSQ), 488–493 (VSSSSE), 494–500 (VSSSSSE), 502–507 (VSSSSE), 508–513 (VSSSSE), 515–520 (VSSSSE), 521–526 (VSSSSE), 527–532 (VSSSSE), 533–538 (VSSSSQ), 546–551 (VSSSSE), 552–557 (VSSSSS), 560–565 (VSSSSE), 566–571 (VSSSSE), 573–578 (VSSSSE), 579–584 (VSSSSE), 585–590 (VSSSSE), 591–596 (VSSSSQ), 604–609 (VSSSSE), 611–616 (VSSSSE), 617–622 (VSSSSE), 623–628 (VSSSSE), 629–634 (VSSSSE), 635–640 (VSSSSE), 641–646 (VSSSSQ), 654–659 (VSSSSE), 660–665 (VSSSSS), 668–673 (VSSSSE), 674–679 (VSSSSE), 681–686 (VSSSSE), 687–692 (VSSSSE), 693–698 (VSSSSE), 699–704 (VSSSSQ), 712–717 (VSSSSE), 719–724 (VSSSSE), 725–730 (VSSSSE), 731–736 (VSSSSE), 737–742 (VSSSSE), 743–748 (VSSSSE), 749–754 (VSSSSE), 771–776 (VTSSSE), 777–782 (VSSSSQ), and 797–802 (VSSSSE). Residues 104 to 541 (VSSSSSEVIS…EVSSSSQVTS (438 aa)) form an 88 X 6 AA approximate tandem repeats region. The disordered stretch occupies residues 113–833 (SSSSEEASSS…VSSSSASSEV (721 aa)). N-linked (GlcNAc...) asparagine glycosylation is present at asparagine 817. Residues 824 to 829 (VSSSSA) form a 1-88 repeat. N-linked (GlcNAc...) asparagine glycans are attached at residues asparagine 994 and asparagine 1074. Asparagine 1382 is lipidated: GPI-anchor amidated asparagine. Positions 1383-1404 (AASRQSFNYKFIVGLILAYIIA) are cleaved as a propeptide — removed in mature form.

It localises to the cell membrane. Functionally, predicted GPI-anchored adhesin-like protein which may be involved in filamentous growth and chlamydospore formation. This chain is Probable GPI-anchored adhesin-like protein PGA55 (PGA55), found in Candida albicans (strain SC5314 / ATCC MYA-2876) (Yeast).